The following is a 420-amino-acid chain: Phosphoribosylamine--glycine ligase (420 aa).

The ATP-grasp domain occupies 108–314; that stretch reads KEIMVKYGVP…FAQNITDILD (207 aa). 134 to 195 contacts ATP; it reads IEKHGAPIVV…EEFLEGEEFS (62 aa). The Mg(2+) site is built by Glu284 and Asn286.

The protein belongs to the GARS family. Requires Mg(2+) as cofactor. It depends on Mn(2+) as a cofactor.

The enzyme catalyses 5-phospho-beta-D-ribosylamine + glycine + ATP = N(1)-(5-phospho-beta-D-ribosyl)glycinamide + ADP + phosphate + H(+). It functions in the pathway purine metabolism; IMP biosynthesis via de novo pathway; N(1)-(5-phospho-D-ribosyl)glycinamide from 5-phospho-alpha-D-ribose 1-diphosphate: step 2/2. The chain is Phosphoribosylamine--glycine ligase from Streptococcus pneumoniae serotype 4 (strain ATCC BAA-334 / TIGR4).